Here is a 63-residue protein sequence, read N- to C-terminus: Large ribosomal subunit protein bL35 (63 aa).

Positions 26–50 (GSGMRHNLEHKSARKRRALKRDDVL) are disordered.

It belongs to the bacterial ribosomal protein bL35 family.

The sequence is that of Large ribosomal subunit protein bL35 from Bifidobacterium animalis subsp. lactis (strain AD011).